A 200-amino-acid polypeptide reads, in one-letter code: Methylthioribulose-1-phosphate dehydratase-like protein (200 aa).

Belongs to the aldolase class II family. MtnB subfamily.

The protein is Methylthioribulose-1-phosphate dehydratase-like protein of Schizosaccharomyces pombe (strain 972 / ATCC 24843) (Fission yeast).